Consider the following 1032-residue polypeptide: MAEPSAATQSHSISSSSFGAEPSAPGGGGSPGACPALGTKSCSSSCADSFVSSSSSQPVSLFSTSQEGLSSLCSDEPSSEIMTSSFLSSSEIHNTGLTILHGEKSHVLGSQPILAKEGKDHLDLLDMKKMEKPQGTSNNVSDSSVSLAAGVHCDRPSIPASFPEHPAFLSKKIGQVEEQIDKETKNPNGVSSREAKTALDADDRFTLLTAQKPPTEYSKVEGIYTYSLSPSKVSGDDVIEKDSPESPFEVIIDKAAFDKEFKDSYKESTDDFGSWSVHTDKESSEDISETNDKLFPLRNKEAGRYPMSALLSRQFSHTNAALEEVSRCVNDMHNFTNEILTWDLVPQVKQQTDKSSDCITKTTGLDMSEYNSEIPVVNLKTSTHQKTPVCSIDGSTPITKSTGDWAEASLQQENAITGKPVPDSLNSTKEFSIKGVQGNMQKQDDTLAELPGSPPEKCDSLGSGVATVKVVLPDDHLKDEMDWQSSALGEITEADSSGESDDTVIEDITADTSFENNKIQAEKPVSIPSAVVKTGEREIKEIPSCEREEKTSKNFEELVSDSELHQDQPDILGRSPASEAACSKVPDTNVSLEDVSEVAPEKPITTENPKLPSTVSPNVFNETEFSLNVTTSAYLESLHGKNVKHIDDSSPEDLIAAFTETRDKGIVDSERNAFKAISEKMTDFKTTPPVEVLHENESGGSEIKDIGSKYSEQSKETNGSEPLGVFPTQGTPVASLDLEQEQLTIKALKELGERQVEKSTSAQRDAELPSEEVLKQTFTFAPESWPQRSYDILERNVKNGSDLGISQKPITIRETTRVDAVSSLSKTELVKKHVLARLLTDFSVHDLIFWRDVKKTGFVFGTTLIMLLSLAAFSVISVVSYLILALLSVTISFRIYKSVIQAVQKSEEGHPFKAYLDVDITLSSEAFHNYMNAAMVHINRALKLIIRLFLVEDLVDSLKLAVFMWLMTYVGAVFNGITLLILAELLIFSVPIVYEKYKTQIDHYVGIARDQTKSIVEKIQAKLPGIAKKKAE.

The segment covering 1-24 has biased composition (low complexity); the sequence is MAEPSAATQSHSISSSSFGAEPSA. Residues 1 to 61 are disordered; that stretch reads MAEPSAATQS…SSSSSQPVSL (61 aa). The residue at position 2 (Ala2) is an N-acetylalanine. Over 2–863 the chain is Cytoplasmic; the sequence is AEPSAATQSH…KKTGFVFGTT (862 aa). A Phosphoserine modification is found at Ser30. Residues 32–61 show a composition bias toward low complexity; sequence GACPALGTKSCSSSCADSFVSSSSSQPVSL. Residues Ser229, Ser243, Ser246, Ser283, Ser316, and Ser453 each carry the phosphoserine modification. The segment covering 545 to 568 has biased composition (basic and acidic residues); the sequence is CEREEKTSKNFEELVSDSELHQDQ. Residues 545–617 are disordered; it reads CEREEKTSKN…NPKLPSTVSP (73 aa). Residues 605 to 617 are compositionally biased toward polar residues; the sequence is TTENPKLPSTVSP. Phosphoserine occurs at positions 649 and 650. Residues 696-715 are compositionally biased toward basic and acidic residues; sequence NESGGSEIKDIGSKYSEQSK. Positions 696–726 are disordered; that stretch reads NESGGSEIKDIGSKYSEQSKETNGSEPLGVF. Residue Ser735 is modified to Phosphoserine. Residues 844 to 1032 enclose the Reticulon domain; it reads VHDLIFWRDV…LPGIAKKKAE (189 aa). The helical intramembrane region spans 864 to 887; the sequence is LIMLLSLAAFSVISVVSYLILALL. Residues 888–947 are Cytoplasmic-facing; the sequence is SVTISFRIYKSVIQAVQKSEEGHPFKAYLDVDITLSSEAFHNYMNAAMVHINRALKLIIR. Residues 948–968 constitute an intramembrane region (helical); it reads LFLVEDLVDSLKLAVFMWLMT. Topologically, residues 969 to 972 are cytoplasmic; sequence YVGA. Residues 973–993 constitute an intramembrane region (helical); that stretch reads VFNGITLLILAELLIFSVPIV. Residues 987 to 1032 are interaction with FADD; that stretch reads IFSVPIVYEKYKTQIDHYVGIARDQTKSIVEKIQAKLPGIAKKKAE. At 994–1032 the chain is on the cytoplasmic side; sequence YEKYKTQIDHYVGIARDQTKSIVEKIQAKLPGIAKKKAE. The tract at residues 1000–1002 is interaction with BACE1; the sequence is QID.

As to quaternary structure, homodimer. Interacts with ATL1. Interacts with RTN4. Isoform 3 interacts with BACE1, BACE2, BCL2 and FADD. Interacts with ATL2. Interacts with TMEM33. Interacts with ZFYVE27 and with KIF5A in a ZFYVE27-dependent manner. Interacts with RIGI. Interacts with TRIM25. In terms of assembly, (Microbial infection) Interacts with Coxsackievirus A16, enterovirus 71 and poliovirus P2C proteins. (Microbial infection) Interacts with West Nile virus protein NS4A. As to expression, isoform 3 is widely expressed, with highest levels in brain, where it is enriched in neuronal cell bodies from gray matter (at protein level). Three times more abundant in macula than in peripheral retina. Isoform 1 is expressed at high levels in brain and at low levels in skeletal muscle. Isoform 2 is only found in melanoma.

The protein localises to the endoplasmic reticulum membrane. Its subcellular location is the golgi apparatus membrane. May be involved in membrane trafficking in the early secretory pathway. Inhibits BACE1 activity and amyloid precursor protein processing. May induce caspase-8 cascade and apoptosis. May favor BCL2 translocation to the mitochondria upon endoplasmic reticulum stress. Induces the formation of endoplasmic reticulum tubules. Also acts as an inflammation-resolving regulator by interacting with both TRIM25 and RIGI, subsequently impairing RIGI 'Lys-63'-linked polyubiquitination leading to IRF3 and NF-kappa-B inhibition. Functionally, (Microbial infection) Plays a positive role in viral replication and pathogenesis of enteroviruses. The chain is Reticulon-3 (RTN3) from Homo sapiens (Human).